The chain runs to 393 residues: Glutamyl-tRNA reductase (393 aa).

Substrate contacts are provided by residues 47–50 (TCGR), Ser98, 103–105 (ETD), and Gln109. The active-site Nucleophile is the Cys48. 177–182 (GAGAVG) provides a ligand contact to NADP(+).

This sequence belongs to the glutamyl-tRNA reductase family. As to quaternary structure, homodimer.

It carries out the reaction (S)-4-amino-5-oxopentanoate + tRNA(Glu) + NADP(+) = L-glutamyl-tRNA(Glu) + NADPH + H(+). Its pathway is porphyrin-containing compound metabolism; protoporphyrin-IX biosynthesis; 5-aminolevulinate from L-glutamyl-tRNA(Glu): step 1/2. Catalyzes the NADPH-dependent reduction of glutamyl-tRNA(Glu) to glutamate 1-semialdehyde (GSA). This Pyrobaculum islandicum (strain DSM 4184 / JCM 9189 / GEO3) protein is Glutamyl-tRNA reductase.